The following is a 674-amino-acid chain: NADH-ubiquinone oxidoreductase chain 5 (674 aa).

17 helical membrane passes run glycine 27–phenylalanine 47, leucine 81–valine 101, phenylalanine 113–tyrosine 133, isoleucine 135–phenylalanine 155, valine 173–aspartate 193, isoleucine 200–alanine 220, threonine 242–leucine 262, leucine 275–leucine 295, arginine 301–tyrosine 323, valine 325–glycine 345, leucine 363–alanine 383, valine 410–isoleucine 430, threonine 453–alanine 473, alanine 514–phenylalanine 534, tyrosine 556–isoleucine 576, alanine 616–leucine 636, and alanine 639–isoleucine 659.

This sequence belongs to the complex I subunit 5 family.

The protein localises to the mitochondrion inner membrane. It catalyses the reaction a ubiquinone + NADH + 5 H(+)(in) = a ubiquinol + NAD(+) + 4 H(+)(out). Its function is as follows. Core subunit of the mitochondrial membrane respiratory chain NADH dehydrogenase (Complex I) that is believed to belong to the minimal assembly required for catalysis. Complex I functions in the transfer of electrons from NADH to the respiratory chain. The immediate electron acceptor for the enzyme is believed to be ubiquinone. The chain is NADH-ubiquinone oxidoreductase chain 5 (ND5) from Mycosarcoma maydis (Corn smut fungus).